Consider the following 118-residue polypeptide: Beta-defensin 126 (118 aa).

The first 20 residues, 1 to 20 (MKSLLFTLAVFMLLAQLVSG), serve as a signal peptide directing secretion. An in vitro binds to LPS, mediates antimicrobial activity and inhibits LPS-mediated inflammation region spans residues 21–63 (SWYVKKCLNDVGICKKKCKPEELHVKNGWAMCGKQRDCCVPAD). 3 disulfides stabilise this stretch: Cys-27–Cys-58, Cys-34–Cys-52, and Cys-38–Cys-59.

This sequence belongs to the beta-defensin family. As to quaternary structure, homodimer or homooligomer; disulfide-linked. O-glycosylated; glycans contain alpha(2,3)-linked sialic acids.

It is found in the secreted. Its function is as follows. Highly glycosylated atypical beta-defensin involved in several aspects of sperm function. Facilitates sperm transport in the female reproductive tract and contributes to sperm protection against immunodetection; both functions are probably implicating the negative surface charge provided by its O-linked oligosaccharides in the sperm glycocalyx. Involved in binding of sperm to oviductal epithelial cells to form a sperm reservoir until ovulation. Release from the sperm surface during capacitation and ovaluation by an elevation of oviductal fluid pH is unmasking other surface components and allows sperm to penetrate the cumulus matrix and bind to the zona pellucida of the oocyte. In vitro has antimicrobial activity and may inhibit LPS-mediated inflammation. This chain is Beta-defensin 126 (DEFB126), found in Pongo pygmaeus (Bornean orangutan).